Reading from the N-terminus, the 703-residue chain is MKTVIILAGLVALALGSEVPVKHSFKVKDVDAAFVERQKKVLDLFQDVDQVNPNDEYYKIGKEYNIEANIDNYSNKKAVEEFLQLYRTGFLPKYYEFSPFYDRLRDEAIGVFHLFYYAKDFDTFYKSAAWARVYLNEGQFLYAYYIAVIQRKDTQGFVVPAPYEVYPQFFANLNTMLKVYRTKMQDGVVSADLAAQHGIVKEKNYYVYYANYSNSLVYNNEEQRLSYFTEDIGLNSYYYYFHSHLPFWWNSERYGALKSRRGEIYYYFYQQLMARYYFERLSNGLGDIPEFSWYSPVKSGYYPLMSSYYYPFAQRPNYWNVHSEENYEKVRFLDTYEMSFLQFLQNGHFKAFDQKIDFHDFKAINFVGNYWQDNADLYGEEVTKDYQRSYEIIARQVLGAAPKPFDKYTFMPSALDFYQTSLRDPMFYQLYNRILKYIYEYKQYLQPYSSEKLAFKGVKVVDVVVDKLVTFFEYYDFDASNSVFWSKEEVKSSYPHDFKIRQPRLNHKPFSVSIDIKSEAAVDAVVKIFMAPKYDDNGFPLKLENNWNKFFELDWFTYKFVAGDNKIVRNSNDFLIFKDDSVPMTELYKLLEQNKVPHDMSEDYGYLPKRLMLPRGTEGGFPFQFFVFVYPFNADSKDLAPFEAFIQDNKPLGYPFDRPVVDAYFKQHNMFFKDVFVYHDGEYFPYKFNVPSHVMHSNVVPKH.

An N-terminal signal peptide occupies residues 1–16; it reads MKTVIILAGLVALALG. Asn72 and Asn211 each carry an N-linked (GlcNAc...) asparagine glycan.

The protein belongs to the hemocyanin family. As to quaternary structure, arylphorin is a hexamer of subunits alpha and beta. In terms of tissue distribution, fat body.

The protein resides in the secreted. Its subcellular location is the extracellular space. Functionally, arylphorin is a larval storage protein (LSP) which may serve as a storage protein used primarily as a source of aromatic amino acids for protein synthesis during metamorphosis. It is a constituent of the sclerotizing system of the cuticle, and serves as a carrier for ecdysteroid hormone. The polypeptide is Arylphorin subunit beta (Manduca sexta (Tobacco hawkmoth)).